The chain runs to 399 residues: Acetate kinase (399 aa).

Mg(2+) is bound at residue Asn8. Lys15 serves as a coordination point for ATP. Arg89 lines the substrate pocket. The active-site Proton donor/acceptor is Asp146. Residues 206 to 210, 283 to 285, and 331 to 335 contribute to the ATP site; these read HVGNG, DMR, and GMGEN. Glu383 lines the Mg(2+) pocket.

The protein belongs to the acetokinase family. In terms of assembly, homodimer. It depends on Mg(2+) as a cofactor. The cofactor is Mn(2+).

It is found in the cytoplasm. It carries out the reaction acetate + ATP = acetyl phosphate + ADP. It functions in the pathway metabolic intermediate biosynthesis; acetyl-CoA biosynthesis; acetyl-CoA from acetate: step 1/2. Catalyzes the formation of acetyl phosphate from acetate and ATP. Can also catalyze the reverse reaction. The protein is Acetate kinase of Streptococcus equi subsp. zooepidemicus (strain H70).